We begin with the raw amino-acid sequence, 425 residues long: Histidine--tRNA ligase (425 aa).

It belongs to the class-II aminoacyl-tRNA synthetase family. As to quaternary structure, homodimer.

Its subcellular location is the cytoplasm. The enzyme catalyses tRNA(His) + L-histidine + ATP = L-histidyl-tRNA(His) + AMP + diphosphate + H(+). The sequence is that of Histidine--tRNA ligase from Shewanella sp. (strain MR-4).